The sequence spans 278 residues: Inositol oxygenase (278 aa).

Substrate is bound by residues arginine 22 and aspartate 78–serine 80. The Fe cation site is built by histidine 91, histidine 116, and aspartate 117. Substrate is bound by residues lysine 120 and glycine 134 to aspartate 135. 3 residues coordinate Fe cation: histidine 187, histidine 213, and aspartate 246. Substrate is bound at residue histidine 213 to serine 214.

This sequence belongs to the myo-inositol oxygenase family. It depends on Fe cation as a cofactor.

The protein resides in the cytoplasm. The enzyme catalyses myo-inositol + O2 = D-glucuronate + H2O + H(+). Its pathway is polyol metabolism; myo-inositol degradation into D-glucuronate; D-glucuronate from myo-inositol: step 1/1. In Danio rerio (Zebrafish), this protein is Inositol oxygenase (miox).